The sequence spans 163 residues: MASTCSFDIVSDFEWQELVNAIDQANREIKARYDLKDTKTEIKLDPTEITISTDSEFTLDAVHNVLQTKAVKRKLSLKIFDYGIIESASGNRVRQAIKLQKGIDTELAKKISKLIRTDYKKVQASIQGEVVRVSSKSKDDLQQVMQDLKQEDWPVALQFTNYR.

This sequence belongs to the YajQ family.

Its function is as follows. Nucleotide-binding protein. This is Nucleotide-binding protein AM1_1863 from Acaryochloris marina (strain MBIC 11017).